The primary structure comprises 50 residues: Phospholipase A2 trimorphin (50 aa).

Ca(2+) contacts are provided by Tyr-28, Gly-30, and Gly-32. A disulfide bridge links Cys-29 with Cys-45. The active site involves His-48. Asp-49 contacts Ca(2+).

Ca(2+) is required as a cofactor. Expressed by the venom gland.

It localises to the secreted. It catalyses the reaction a 1,2-diacyl-sn-glycero-3-phosphocholine + H2O = a 1-acyl-sn-glycero-3-phosphocholine + a fatty acid + H(+). Inhibited by EDTA. PLA2 catalyzes the calcium-dependent hydrolysis of the 2-acyl groups in 3-sn-phosphoglycerides. This chain is Phospholipase A2 trimorphin, found in Trimorphodon lambda (Sonoran lyre snake).